The sequence spans 134 residues: Small ribosomal subunit protein bS6 (134 aa).

Residues 97–134 (TDVSPIKASEGREDRRSAPQREERNHDNSDEVSEESED) form a disordered region. A compositionally biased stretch (basic and acidic residues) spans 105–125 (SEGREDRRSAPQREERNHDNS).

It belongs to the bacterial ribosomal protein bS6 family.

Functionally, binds together with bS18 to 16S ribosomal RNA. The protein is Small ribosomal subunit protein bS6 of Marinomonas sp. (strain MWYL1).